A 447-amino-acid polypeptide reads, in one-letter code: MKVHMIGVGGAGMSGIAEVLARRGHEVTGSDLKESPYTRRLAAAGVKVYIGHEARQVGDAEVVVISTAIPKTNPELLEARRRSIPVIPRAEALARILAEGRGIAVAGTHGKTTTTSMIAHSLRALGENPTALVGGELNDIGSNVIFGREDLIVAEADESDRSILRLHPQAAVITNIEYDHPDFYASLEEVVETFARFVAGLPPEGHLVLCADDPRCRRLAELAPCPVTTYGLSGGELRARVLSPGSYLLFEGARKRGEVSLGVYGRHNVLNSLAAAGIARWLGHDPLEAARTLGSFGGVRRRFQLKGERSGVRVVDDYAHHPTEIMAILDVARATAAPEGRIIAVFQPHRYSRTRKLYREFGRAFGRADAVVVTEVYGAGEMPQPGVSGKLVVDAICETSDRPEVYYVPDQEALPEVLRMISGPRDTVITLGAGDISRAGEELLARL.

An ATP-binding site is contributed by 107–113 (GTHGKTT).

It belongs to the MurCDEF family.

It is found in the cytoplasm. The catalysed reaction is UDP-N-acetyl-alpha-D-muramate + L-alanine + ATP = UDP-N-acetyl-alpha-D-muramoyl-L-alanine + ADP + phosphate + H(+). It functions in the pathway cell wall biogenesis; peptidoglycan biosynthesis. Functionally, cell wall formation. This chain is UDP-N-acetylmuramate--L-alanine ligase, found in Rubrobacter xylanophilus (strain DSM 9941 / JCM 11954 / NBRC 16129 / PRD-1).